Reading from the N-terminus, the 105-residue chain is Endogenous retrovirus group K member 104 Rec protein (105 aa).

Residues 1-43 are disordered; it reads MNPSEMQRKAPPRRRRHCNRAPLTHKMNKMVTSEEEMKLPSTK. The segment covering 10 to 19 has biased composition (basic residues); it reads APPRRRRHCN. Residues 13 to 20 carry the Nuclear localization signal motif; that stretch reads RRRRHCNR. The Nuclear export signal signature appears at 50–59; it reads WAQLKKLTQL.

As to quaternary structure, forms homodimers, homotrimers, and homotetramers via a C-terminal domain. Associates with XPO1 and with ZNF145.

It localises to the cytoplasm. The protein localises to the nucleus. Its subcellular location is the nucleolus. In terms of biological role, retroviral replication requires the nuclear export and translation of unspliced, singly-spliced and multiply-spliced derivatives of the initial genomic transcript. Rec interacts with a highly structured RNA element (RcRE) present in the viral 3'LTR and recruits the cellular nuclear export machinery. This permits export to the cytoplasm of unspliced genomic or incompletely spliced subgenomic viral transcripts. The sequence is that of Endogenous retrovirus group K member 104 Rec protein (HERV-K104) from Homo sapiens (Human).